The primary structure comprises 189 residues: Large ribosomal subunit protein bL12c (189 aa).

Disordered stretches follow at residues 1-30 (MAAT…HPQP) and 165-189 (EGVS…VSIV). Residues 1–56 (MAATTTMATLNLPSLTSHPNSSTFPKHPQPLQFPFRTTTNPISLSSTRTTRLRPIA) constitute a chloroplast transit peptide. Polar residues predominate over residues 11-24 (NLPSLTSHPNSSTF). Residues 165–183 (EGVSKDDAEDAKKQLEDAG) are compositionally biased toward basic and acidic residues.

As to quaternary structure, component of the chloroplast large ribosomal subunit (LSU). Mature 70S chloroplast ribosomes of higher plants consist of a small (30S) and a large (50S) subunit. The 30S small subunit contains 1 molecule of ribosomal RNA (16S rRNA) and 24 different proteins. The 50S large subunit contains 3 rRNA molecules (23S, 5S and 4.5S rRNA) and 33 different proteins.

The protein localises to the plastid. It localises to the chloroplast. Component of the chloroplast ribosome (chloro-ribosome), a dedicated translation machinery responsible for the synthesis of chloroplast genome-encoded proteins, including proteins of the transcription and translation machinery and components of the photosynthetic apparatus. The polypeptide is Large ribosomal subunit protein bL12c (RPL12) (Spinacia oleracea (Spinach)).